The chain runs to 380 residues: Type 4 apparatus protein DotM (380 aa).

Helical transmembrane passes span Met-18 to Ala-38 and Tyr-99 to Leu-119.

The T4BSS is a complex nanomachine composed of several subcomplexes. This subunit is part of the Type IV Coupling Complex (T4CC), a subcomplex composed of the DotLMNYZ core and the IcmSW-LvgA adapter subunits, linked by the C-terminal tail of DotL. Six DotLMNYZ hetero-pentameric units may assemble into a hexameric nanomachine, forming an inner membrane channel for effectors to pass through. Interacts directly with DotL.

It is found in the cell inner membrane. In terms of biological role, component of the Dot/Icm type IVB secretion system (T4BSS), which is used to inject bacterial effector proteins into eukaryotic host cells. Part of a subcomplex which recruits effector proteins and delivers them to the core transmembrane subcomplex. Forms the interacting surface for recruitment of acidic Glu-rich motif-containing effectors. The polypeptide is Type 4 apparatus protein DotM (Legionella pneumophila subsp. pneumophila (strain Philadelphia 1 / ATCC 33152 / DSM 7513)).